Consider the following 296-residue polypeptide: Formylmethanofuran--tetrahydromethanopterin formyltransferase-like protein (296 aa).

This sequence belongs to the FTR family.

The polypeptide is Formylmethanofuran--tetrahydromethanopterin formyltransferase-like protein (ehaS) (Methanothermobacter marburgensis (strain ATCC BAA-927 / DSM 2133 / JCM 14651 / NBRC 100331 / OCM 82 / Marburg) (Methanobacterium thermoautotrophicum)).